Consider the following 416-residue polypeptide: Probable glucan 1,3-beta-glucosidase A (416 aa).

Residues 1-22 (MIFKFSQKALVALYLVVGLAEA) form the signal peptide. Glutamate 211 (proton donor) is an active-site residue. 2 cysteine pairs are disulfide-bonded: cysteine 291–cysteine 415 and cysteine 316–cysteine 342. Glutamate 308 acts as the Nucleophile in catalysis. Asparagine 344 carries N-linked (GlcNAc...) asparagine glycosylation.

The protein belongs to the glycosyl hydrolase 5 (cellulase A) family. Monomer. The cofactor is Mn(2+).

It localises to the secreted. It carries out the reaction Successive hydrolysis of beta-D-glucose units from the non-reducing ends of (1-&gt;3)-beta-D-glucans, releasing alpha-glucose.. Beta-glucanases participate in the metabolism of beta-glucan, the main structural component of the cell wall. It could also function biosynthetically as a transglycosylase. The polypeptide is Probable glucan 1,3-beta-glucosidase A (exgA) (Aspergillus fumigatus (strain ATCC MYA-4609 / CBS 101355 / FGSC A1100 / Af293) (Neosartorya fumigata)).